The chain runs to 547 residues: Chaperonin GroEL (547 aa).

ATP contacts are provided by residues 30–33 (TLGP), lysine 51, 87–91 (DGTTT), glycine 415, 479–481 (NAA), and aspartate 495.

The protein belongs to the chaperonin (HSP60) family. In terms of assembly, forms a cylinder of 14 subunits composed of two heptameric rings stacked back-to-back. Interacts with the co-chaperonin GroES.

The protein localises to the cytoplasm. It catalyses the reaction ATP + H2O + a folded polypeptide = ADP + phosphate + an unfolded polypeptide.. Its function is as follows. Together with its co-chaperonin GroES, plays an essential role in assisting protein folding. The GroEL-GroES system forms a nano-cage that allows encapsulation of the non-native substrate proteins and provides a physical environment optimized to promote and accelerate protein folding. The polypeptide is Chaperonin GroEL (Nitratidesulfovibrio vulgaris (strain ATCC 29579 / DSM 644 / CCUG 34227 / NCIMB 8303 / VKM B-1760 / Hildenborough) (Desulfovibrio vulgaris)).